Consider the following 437-residue polypeptide: MTTEASNPEVNATAEVAVPVNPLLRSVTVEIPSDVVDAERNKHVQQYAKLARVPGFRKGKVPPSVIRTRFAQDINEEIVRTLIPHYFREETGKQNLQPVSQPQVTDLHLHDGEPLKFTAEFEILPEIPTTGYENIKVEHPPVEVTDAEIEDTIKSLQEQRATYDPIEDRAAEDGDFVQISFEGRDKSDPEAKPVEVPSIMVELGGSNTVQEFTENLRGTKAGDEKTFDVVYPADYGDQRLAGKSVEYHVSVKSLKKKIFPELDEAFISELGADVKTPDELRAKIREGAEHEKKHHAEHEGKDKLVDALVKLNDFPVPESMVNSQIEIRLERGLRALAQQGMRTEDMKKMDFGKLREGQREAATREVKASLLLEKIADAEKIEVSDEELDRQIAGLARQSQQSPEQVRARLTQDGSLDRIRTQIRNEKTLDLLYSRSA.

In terms of domain architecture, PPIase FKBP-type spans 174–260 (GDFVQISFEG…VKSLKKKIFP (87 aa)).

It belongs to the FKBP-type PPIase family. Tig subfamily.

The protein resides in the cytoplasm. It carries out the reaction [protein]-peptidylproline (omega=180) = [protein]-peptidylproline (omega=0). Functionally, involved in protein export. Acts as a chaperone by maintaining the newly synthesized protein in an open conformation. Functions as a peptidyl-prolyl cis-trans isomerase. In Koribacter versatilis (strain Ellin345), this protein is Trigger factor.